The primary structure comprises 585 residues: Optineurin (585 aa).

The disordered stretch occupies residues 1-32 (MSHQPLSCLTEKGDSSCETPGNGPSNMVHPNL). Positions 16-25 (SCETPGNGPS) are enriched in polar residues. The stretch at 38-181 (EELLQQMKEL…VSELQLKLNS (144 aa)) forms a coiled coil. Positions 58-220 (MKLNNQAMKG…GPTRTDSISM (163 aa)) are interaction with Rab8. An LIR motif is present at residues 187-192 (DSFVEI). Phosphoserine occurs at positions 188 and 209. Disordered stretches follow at residues 200–220 (EGAMKEMRNSAGPTRTDSISM) and 269–299 (FEKKANGHSAIETQTEGSTQKEEEDKDPESV). Positions 244–512 (CLREGNQKVE…LLKENNDFED (269 aa)) form a coiled coil. Serine 346 is modified (phosphoserine). Residues 415 to 585 (TKQQAEKVDK…LQIHVMDCII (171 aa)) are interaction with HD. Positions 416 to 525 (KQQAEKVDKV…RQSLMEMQCR (110 aa)) are interaction with MYO6. Positions 478 to 483 (DFHAER) match the UBAN motif. Serine 531 is modified (phosphoserine). A CCHC NOA-type zinc finger spans residues 555–585 (PRSIPIHSCPKCGEVLPDIDTLQIHVMDCII). Residues cysteine 563, cysteine 566, histidine 579, and cysteine 583 each contribute to the Zn(2+) site.

As to quaternary structure, self-associates. Interacts with HD. Interacts with GTF3A. Interacts with MYO6. Interacts (via UBAN) with ubiquitinated TFRC. Interacts with GTP-bound Rab8 (RAB8A and/or RAB8B). Interacts with TBC1D17. Interacts with TBK1. Interacts with TRAF3. Binds to linear ubiquitin chains. Interacts with LC3 family members MAP1LC3A, MAP1LC3B, GABARAP, GABARAPL1 and GABARAPL2; OPTN phosphorylation increases the association (at least with MAP1LC3B). Interacts with RAB12; the interaction may be indirect. Interacts with TBK1; this interaction leads to the Golgi localization of TBK1 and its subsequent activation. Interacts with palmitoyltransferase ZDHHC17/HIP14; the interaction does not lead to palmitoylation of OPTN. Interacts with CYLD. Interacts with TOM1; the interaction is indirect and is mediated by MYO6, which acts as a bridge between TOM1 and OPTN. Interacts with USP12; the interaction is independent of USP12 deubiquitinase activity and may be involved in regulation of autophagic flux. Phosphorylated by TBK1, leading to restrict bacterial proliferation in case of infection.

It is found in the cytoplasm. The protein resides in the perinuclear region. It localises to the golgi apparatus. Its subcellular location is the trans-Golgi network. The protein localises to the cytoplasmic vesicle. It is found in the autophagosome. The protein resides in the recycling endosome. Functionally, plays an important role in the maintenance of the Golgi complex, in membrane trafficking, in exocytosis, through its interaction with myosin VI and Rab8. Links myosin VI to the Golgi complex and plays an important role in Golgi ribbon formation. Negatively regulates the induction of IFNB in response to RNA virus infection. Plays a neuroprotective role in the eye and optic nerve. Probably part of the TNF-alpha signaling pathway that can shift the equilibrium toward induction of cell death. May act by regulating membrane trafficking and cellular morphogenesis via a complex that contains Rab8 and huntingtin (HD). Mediates the interaction of Rab8 with the probable GTPase-activating protein TBC1D17 during Rab8-mediated endocytic trafficking, such as that of transferrin receptor (TFRC/TfR); regulates Rab8 recruitment to tubules emanating from the endocytic recycling compartment. Autophagy receptor that interacts directly with both the cargo to become degraded and an autophagy modifier of the MAP1 LC3 family; targets ubiquitin-coated bacteria (xenophagy) and appears to function in the same pathway as SQSTM1 and CALCOCO2/NDP52. The sequence is that of Optineurin (Optn) from Rattus norvegicus (Rat).